A 402-amino-acid polypeptide reads, in one-letter code: Probable peptidoglycan glycosyltransferase FtsW (402 aa).

Over 1–24 (MLYRLKLLLSGQNTKKERVRAKLE) the chain is Cytoplasmic. Residues 25-45 (IDISIVFVMLGLLIFGWVMVT) form a helical membrane-spanning segment. The Periplasmic segment spans residues 46-63 (SASMVVALDDYNNPYFYS). Residues 64 to 84 (IRQGFFAVIAIFLFLLALLVP) traverse the membrane as a helical segment. Over 85–91 (TKNYEKN) the chain is Cytoplasmic. Residues 92–112 (YNAFFFIMLIVLVAVLVPGVG) traverse the membrane as a helical segment. Over 113–121 (KSVNGARRW) the chain is Periplasmic. Residues 122-142 (IPLIIINIQVAELAKLLAIIF) form a helical membrane-spanning segment. Residues 143–160 (FSGYIAENLPKMTNFKEG) lie on the Cytoplasmic side of the membrane. 2 consecutive transmembrane segments (helical) span residues 161–181 (ILTPITLLGCIAVLLLMQPDF) and 182–202 (GSTVVISICVMGMLFVSGNKV). Residue R203 is a topological domain, cytoplasmic. Residues 204 to 224 (WYGLLIGAMLIMATMLVIISP) form a helical membrane-spanning segment. The Periplasmic portion of the chain corresponds to 225 to 284 (YRMHRITGFLHPWENANGSGYQLVQALIGFGRGGWFGDGLGNGVQKQFFLPEAHTDFITS). The chain crosses the membrane as a helical span at residues 285-305 (VIAEEIGVIGLMILLMVYLFI). Topologically, residues 306 to 324 (VFRAMNIAKMAFELKRYYQ) are cytoplasmic. Residues 325 to 345 (AFLSYGISFWIGFQVFVNIGV) traverse the membrane as a helical segment. Residues 346 to 357 (NTGLLPTKGLTL) are Periplasmic-facing. A helical transmembrane segment spans residues 358 to 378 (PLISYGGSSLLIMCFTLGILV). The Cytoplasmic segment spans residues 379–402 (RVDFENKLLADTINPKYIYKKVRK).

Belongs to the SEDS family. FtsW subfamily.

The protein localises to the cell inner membrane. The enzyme catalyses [GlcNAc-(1-&gt;4)-Mur2Ac(oyl-L-Ala-gamma-D-Glu-L-Lys-D-Ala-D-Ala)](n)-di-trans,octa-cis-undecaprenyl diphosphate + beta-D-GlcNAc-(1-&gt;4)-Mur2Ac(oyl-L-Ala-gamma-D-Glu-L-Lys-D-Ala-D-Ala)-di-trans,octa-cis-undecaprenyl diphosphate = [GlcNAc-(1-&gt;4)-Mur2Ac(oyl-L-Ala-gamma-D-Glu-L-Lys-D-Ala-D-Ala)](n+1)-di-trans,octa-cis-undecaprenyl diphosphate + di-trans,octa-cis-undecaprenyl diphosphate + H(+). Its pathway is cell wall biogenesis; peptidoglycan biosynthesis. In terms of biological role, peptidoglycan polymerase that is essential for cell division. This is Probable peptidoglycan glycosyltransferase FtsW from Francisella salina.